We begin with the raw amino-acid sequence, 537 residues long: Arginine--tRNA ligase (537 aa).

The short motif at 113–123 (ANPTGELHLGH) is the 'HIGH' region element.

It belongs to the class-I aminoacyl-tRNA synthetase family. As to quaternary structure, monomer.

Its subcellular location is the cytoplasm. It catalyses the reaction tRNA(Arg) + L-arginine + ATP = L-arginyl-tRNA(Arg) + AMP + diphosphate. The protein is Arginine--tRNA ligase (argS) of Mycoplasma pneumoniae (strain ATCC 29342 / M129 / Subtype 1) (Mycoplasmoides pneumoniae).